Consider the following 387-residue polypeptide: Galactokinase (387 aa).

33-36 (EHID) is a binding site for substrate. ATP is bound by residues Ser-67 and 124 to 130 (GAGLSSS). The Mg(2+) site is built by Ser-130 and Glu-162. Asp-174 serves as the catalytic Proton acceptor. Tyr-224 provides a ligand contact to substrate.

This sequence belongs to the GHMP kinase family. GalK subfamily.

The protein localises to the cytoplasm. It catalyses the reaction alpha-D-galactose + ATP = alpha-D-galactose 1-phosphate + ADP + H(+). It participates in carbohydrate metabolism; galactose metabolism. Catalyzes the transfer of the gamma-phosphate of ATP to D-galactose to form alpha-D-galactose-1-phosphate (Gal-1-P). This Clostridium perfringens (strain ATCC 13124 / DSM 756 / JCM 1290 / NCIMB 6125 / NCTC 8237 / Type A) protein is Galactokinase.